The primary structure comprises 868 residues: Pro-neuregulin-2, membrane-bound isoform (868 aa).

The tract at residues 1 to 114 (MRQVCCSALP…AAGGMRRDPA (114 aa)) is disordered. Residues 1-127 (MRQVCCSALP…SMLLFGVSLA (127 aa)) constitute a propeptide that is removed on maturation. The segment covering 19-75 (SSYSYSDSSSSSSSNNSSSSTSSRSSSRSSSRSSRGSTTTTSSSENSGSNSGSIFRP) has biased composition (low complexity). Residues asparagine 33 and asparagine 34 are each glycosylated (N-linked (GlcNAc...) asparagine). A compositionally biased stretch (pro residues) spans 76–90 (AAPPEPRPQPQPQPR). Over residues 91-108 (SPAARRAAARSRAAAAGG) the composition is skewed to low complexity. Residues 128-429 (CYSPSLKSVQ…KEAEELYQKR (302 aa)) lie on the Extracellular side of the membrane. N-linked (GlcNAc...) asparagine glycans are attached at residues asparagine 163, asparagine 294, and asparagine 362. One can recognise an Ig-like C2-type domain in the interval 253–348 (PKLKKMKSQT…RGRLHVNSVS (96 aa)). 4 disulfides stabilise this stretch: cysteine 273-cysteine 327, cysteine 361-cysteine 375, cysteine 369-cysteine 386, and cysteine 388-cysteine 397. Residues 357–398 (HARKCNETAKSYCVNGGVCYYIEGINQLSCKCPNGFFGQRCL) form the EGF-like domain. A helical membrane pass occupies residues 430–450 (VLTITGICVALLVVGIVCVVA). Residues 451–868 (YCKTKKQRRQ…TRAKQDSGPL (418 aa)) lie on the Cytoplasmic side of the membrane. Disordered stretches follow at residues 469–488 (MCPAHQNRSLANGPSHPRLD), 516–553 (TFSGSHSCSPSHHCSTATPTSSHRHESHTWSLERSESL), 671–690 (LLRHPAPPGPGPGPGADMQR), 720–806 (ASPF…DGAL), and 823–868 (LRSD…SGPL). Over residues 518–530 (SGSHSCSPSHHCS) the composition is skewed to low complexity. Basic and acidic residues predominate over residues 538 to 551 (HRHESHTWSLERSE). Low complexity predominate over residues 766–794 (LNGLAAQRARAARDSLSLSSGSGCGSASA).

It belongs to the neuregulin family. As to quaternary structure, interacts with ERBB3 and ERBB4. Post-translationally, proteolytic cleavage close to the plasma membrane on the external face leads to the release of the soluble growth factor form. Extensive glycosylation precedes the proteolytic cleavage. Expressed in most parts of the brain, especially the olfactory bulb and cerebellum where it localizes in granule and Purkinje cells. In the hippocampus, found in the granule cells of the dentate gyrus. In the basal forebrain, found in the cholinergic cells. In the hindbrain, weakly detectable in the motor trigeminal nucleus. Not detected in the hypothalamus. Also found in the liver and in the thymus. Not detected in heart, adrenal gland, or testis.

The protein localises to the cell membrane. It is found in the secreted. Its function is as follows. Direct ligand for ERBB3 and ERBB4 tyrosine kinase receptors. Concomitantly recruits ERBB1 and ERBB2 coreceptors, resulting in ligand-stimulated tyrosine phosphorylation and activation of the ERBB receptors. May also promote the heterodimerization with the EGF receptor. The protein is Pro-neuregulin-2, membrane-bound isoform (Nrg2) of Rattus norvegicus (Rat).